The sequence spans 659 residues: UvrABC system protein B (659 aa).

One can recognise a Helicase ATP-binding domain in the interval Glu25–Arg414. Position 38 to 45 (Gly38 to Thr45) interacts with ATP. The Beta-hairpin signature appears at Tyr91–Ile114. A Helicase C-terminal domain is found at Gln431–Ile597. Residues Pro620–Lys655 enclose the UVR domain.

It belongs to the UvrB family. Forms a heterotetramer with UvrA during the search for lesions. Interacts with UvrC in an incision complex.

The protein resides in the cytoplasm. Functionally, the UvrABC repair system catalyzes the recognition and processing of DNA lesions. A damage recognition complex composed of 2 UvrA and 2 UvrB subunits scans DNA for abnormalities. Upon binding of the UvrA(2)B(2) complex to a putative damaged site, the DNA wraps around one UvrB monomer. DNA wrap is dependent on ATP binding by UvrB and probably causes local melting of the DNA helix, facilitating insertion of UvrB beta-hairpin between the DNA strands. Then UvrB probes one DNA strand for the presence of a lesion. If a lesion is found the UvrA subunits dissociate and the UvrB-DNA preincision complex is formed. This complex is subsequently bound by UvrC and the second UvrB is released. If no lesion is found, the DNA wraps around the other UvrB subunit that will check the other stand for damage. This Symbiobacterium thermophilum (strain DSM 24528 / JCM 14929 / IAM 14863 / T) protein is UvrABC system protein B.